A 165-amino-acid polypeptide reads, in one-letter code: REP-associated tyrosine transposase (165 aa).

This sequence belongs to the transposase 17 family. RAYT subfamily. As to quaternary structure, monomer.

Its activity is regulated as follows. Cleavage occurs in the presence of magnesium, but is much more pronounced with manganese. Functionally, transposase that is always flanked by repeated extragenic palindrome (REP) sequences, which are clustered in structures called bacterial interspersed mosaic elements (BIMEs). RayT catalyzes cleavage and recombination of BIMEs. Binds REP sequences and cleaves BIMEs both upstream and downstream of the REP sequence. Could be important in the creation of BIME variability and amplification. The chain is REP-associated tyrosine transposase from Escherichia coli (strain K12).